The sequence spans 298 residues: ATP phosphoribosyltransferase (298 aa).

It belongs to the ATP phosphoribosyltransferase family. Long subfamily. Requires Mg(2+) as cofactor.

Its subcellular location is the cytoplasm. The enzyme catalyses 1-(5-phospho-beta-D-ribosyl)-ATP + diphosphate = 5-phospho-alpha-D-ribose 1-diphosphate + ATP. The protein operates within amino-acid biosynthesis; L-histidine biosynthesis; L-histidine from 5-phospho-alpha-D-ribose 1-diphosphate: step 1/9. Its activity is regulated as follows. Feedback inhibited by histidine. In terms of biological role, catalyzes the condensation of ATP and 5-phosphoribose 1-diphosphate to form N'-(5'-phosphoribosyl)-ATP (PR-ATP). Has a crucial role in the pathway because the rate of histidine biosynthesis seems to be controlled primarily by regulation of HisG enzymatic activity. The protein is ATP phosphoribosyltransferase of Vibrio parahaemolyticus serotype O3:K6 (strain RIMD 2210633).